Reading from the N-terminus, the 415-residue chain is S-inosyl-L-homocysteine hydrolase (415 aa).

Positions 123 and 148 each coordinate substrate. 149–151 contacts NAD(+); sequence TTT. Residues lysine 178 and aspartate 182 each contribute to the substrate site. NAD(+)-binding positions include asparagine 183, 212-217, glutamate 235, 291-293, and asparagine 337; these read GYGWCG and AGH.

The protein belongs to the adenosylhomocysteinase family. In terms of assembly, exists both as a homotetramer and a homodimer, in a 4:1 ratio. It depends on NAD(+) as a cofactor.

The protein resides in the cytoplasm. It catalyses the reaction S-inosyl-L-homocysteine + H2O = L-homocysteine + inosine. It functions in the pathway amino-acid biosynthesis; S-adenosyl-L-methionine biosynthesis. In terms of biological role, catalyzes the hydrolysis of S-inosyl-L-homocysteine (SIH) to L-homocysteine (Hcy) and inosine. Likely functions in a S-adenosyl-L-methionine (SAM) recycling pathway from S-adenosyl-L-homocysteine (SAH) produced from SAM-dependent methylation reactions. Can also catalyze the reverse reaction in vitro, i.e. the synthesis of SIH from Hcy and inosine. Is specific for SIH and inosine as it is unable to either hydrolyze SAH or synthesize SAH from adenosine and Hcy. The protein is S-inosyl-L-homocysteine hydrolase of Methanocaldococcus jannaschii (strain ATCC 43067 / DSM 2661 / JAL-1 / JCM 10045 / NBRC 100440) (Methanococcus jannaschii).